Here is a 61-residue protein sequence, read N- to C-terminus: uncharacterized protein (61 aa).

Helical transmembrane passes span 5–25 (MLYF…SLLL) and 29–49 (YILT…PWYT).

Its subcellular location is the membrane. This is an uncharacterized protein from Saccharomyces cerevisiae (strain ATCC 204508 / S288c) (Baker's yeast).